A 187-amino-acid polypeptide reads, in one-letter code: Major allergen Equ c 1 (187 aa).

The or 16, or 21 signal peptide spans Met-1–Ala-15. N-linked (GlcNAc...) asparagine glycans are attached at residues Asn-53 and Asn-68. Cys-83 and Cys-176 form a disulfide bridge.

The protein belongs to the calycin superfamily. Lipocalin family. Homodimer. Post-translationally, several N-terminal ends may be due to cleavage by signal peptidase at different sites or may be generated by proteolytic processing of the secreted protein. In terms of processing, analysis of the sugar composition shows the presence of GalNAc, Gal, NeuAc, GlcNAc, and Man. May be also O-glycosylated. In terms of tissue distribution, expressed in liver and in sublingual and submaxillary salivary glands. Highly concentrated in secretory fluid such as saliva and urine as well as in hair dandruff extract.

The protein localises to the secreted. This chain is Major allergen Equ c 1, found in Equus caballus (Horse).